A 467-amino-acid polypeptide reads, in one-letter code: NALCN channel auxiliary factor 1 (467 aa).

A helical membrane pass occupies residues leucine 40–alanine 60. Positions methionine 121–arginine 161 are disordered. Asparagine 160, asparagine 226, and asparagine 254 each carry an N-linked (GlcNAc...) asparagine glycan. Intrachain disulfides connect cysteine 200–cysteine 270, cysteine 235–cysteine 322, cysteine 255–cysteine 270, cysteine 313–cysteine 350, cysteine 333–cysteine 386, cysteine 339–cysteine 385, and cysteine 343–cysteine 370. Residues serine 390 to cysteine 408 are compositionally biased toward basic and acidic residues. The tract at residues serine 390–proline 409 is disordered. The chain crosses the membrane as a helical span at residues leucine 426–glutamine 446. Asparagine 462 is a glycosylation site (N-linked (GlcNAc...) asparagine).

It belongs to the NALF family. Component of the NALCN channel complex. NALCN complex consists of NALCN and auxiliary subunits, UNC79, UNC80 and NACL1. These auxiliary subunits are essential for the NALCN channel function.

The protein localises to the cell membrane. Functionally, auxillary component of the NALCN sodium channel complex, a channel that regulates the resting membrane potential and controls neuronal excitability. This chain is NALCN channel auxiliary factor 1, found in Mus musculus (Mouse).